Consider the following 162-residue polypeptide: Endoribonuclease YbeY (162 aa).

The Zn(2+) site is built by His117, His121, and His127.

It belongs to the endoribonuclease YbeY family. Zn(2+) serves as cofactor.

The protein resides in the cytoplasm. Single strand-specific metallo-endoribonuclease involved in late-stage 70S ribosome quality control and in maturation of the 3' terminus of the 16S rRNA. This is Endoribonuclease YbeY from Francisella tularensis subsp. novicida (strain U112).